We begin with the raw amino-acid sequence, 436 residues long: 3-phosphoshikimate 1-carboxyvinyltransferase (436 aa).

Positions 23, 24, and 28 each coordinate 3-phosphoshikimate. Residue Lys-23 participates in phosphoenolpyruvate binding. Phosphoenolpyruvate is bound by residues Gly-97 and Arg-126. The 3-phosphoshikimate site is built by Ser-171, Gln-173, Asp-323, and Lys-350. Gln-173 contributes to the phosphoenolpyruvate binding site. Asp-323 serves as the catalytic Proton acceptor. Residues Arg-354 and Arg-396 each contribute to the phosphoenolpyruvate site.

Belongs to the EPSP synthase family. In terms of assembly, monomer.

Its subcellular location is the cytoplasm. It carries out the reaction 3-phosphoshikimate + phosphoenolpyruvate = 5-O-(1-carboxyvinyl)-3-phosphoshikimate + phosphate. The protein operates within metabolic intermediate biosynthesis; chorismate biosynthesis; chorismate from D-erythrose 4-phosphate and phosphoenolpyruvate: step 6/7. Catalyzes the transfer of the enolpyruvyl moiety of phosphoenolpyruvate (PEP) to the 5-hydroxyl of shikimate-3-phosphate (S3P) to produce enolpyruvyl shikimate-3-phosphate and inorganic phosphate. The chain is 3-phosphoshikimate 1-carboxyvinyltransferase from Prochlorococcus marinus (strain MIT 9301).